A 407-amino-acid chain; its full sequence is Phosphoglycerate kinase (407 aa).

Residues 27–29, Arg-43, 66–69, Arg-125, and Arg-165 contribute to the substrate site; these read DLN and HLGR. ATP contacts are provided by residues Lys-215, Gly-303, Glu-334, and 363-366; that span reads GGDS.

Belongs to the phosphoglycerate kinase family. As to quaternary structure, monomer.

The protein localises to the cytoplasm. It carries out the reaction (2R)-3-phosphoglycerate + ATP = (2R)-3-phospho-glyceroyl phosphate + ADP. Its pathway is carbohydrate degradation; glycolysis; pyruvate from D-glyceraldehyde 3-phosphate: step 2/5. The chain is Phosphoglycerate kinase from Mycobacterium sp. (strain JLS).